The primary structure comprises 361 residues: Allatostatin-A receptor (361 aa).

Residues 1–46 are Extracellular-facing; it reads MESTEDEFYTICLNLTAEDPSFGNCNYTTDFENGELLEKVVSRVVP. 2 N-linked (GlcNAc...) asparagine glycosylation sites follow: asparagine 14 and asparagine 26. A helical transmembrane segment spans residues 47 to 67; that stretch reads IFFGFIGIVGLVGNALVVLVV. Residues 68–78 lie on the Cytoplasmic side of the membrane; that stretch reads AANPGMRSTTN. A helical membrane pass occupies residues 79–99; sequence LLIINLAVADLLFVIFCVPFT. Over 100-116 the chain is Extracellular; sequence ATDYVMPRWPFGDWWCK. A disulfide bridge links cysteine 115 with cysteine 196. A helical transmembrane segment spans residues 117–137; that stretch reads VVQYFIVVTAHASVYTLVLMS. Residues 138–158 lie on the Cytoplasmic side of the membrane; sequence LDRFMAVVHPIASMSIRTEKN. Residues 159-179 form a helical membrane-spanning segment; it reads ALLAIACIWVVILTTAIPVGI. Residues 180–212 are Extracellular-facing; the sequence is CHGEREYSYFNRNHSSCVFLEERGYSKLGFQMS. Asparagine 192 carries an N-linked (GlcNAc...) asparagine glycan. A helical transmembrane segment spans residues 213–233; it reads FFLSSYVIPLALISVLYMCML. At 234-259 the chain is on the cytoplasmic side; it reads TRLWKSAPGGRVSAESRRGRKKVTRM. Residues 260-280 form a helical membrane-spanning segment; it reads VVVVVVVFAVCWCPIQIILLV. At 281-296 the chain is on the extracellular side; that stretch reads KALNKYHITYFTVTAQ. A helical membrane pass occupies residues 297–317; sequence IVSHVLAYMNSCVNPVLYAFL. Topologically, residues 318–361 are cytoplasmic; it reads SENFRVAFRKVMYCPPPYNDGFSGRPQATKTTRTGNGNSCHDIV. Residues 341–361 form a disordered region; sequence GRPQATKTTRTGNGNSCHDIV. A compositionally biased stretch (polar residues) spans 343–361; it reads PQATKTTRTGNGNSCHDIV.

Belongs to the G-protein coupled receptor 1 family. As to expression, expressed in the midgut and, to a lesser extent, in the fore- and hindgut of fifth instar larvae. Also highly expressed in the brain of fourth and fifth instar larvae.

It is found in the cell membrane. Its function is as follows. Acts as a receptor for A-type allatostatin neuropeptide hormones. The sequence is that of Allatostatin-A receptor from Bombyx mori (Silk moth).